We begin with the raw amino-acid sequence, 265 residues long: UPF0246 protein NT01EI_0662 (265 aa).

The protein belongs to the UPF0246 family.

The protein is UPF0246 protein NT01EI_0662 of Edwardsiella ictaluri (strain 93-146).